Reading from the N-terminus, the 333-residue chain is Adenosine deaminase (333 aa).

2 residues coordinate Zn(2+): His-12 and His-14. The substrate site is built by His-14, Asp-16, and Gly-170. A Zn(2+)-binding site is contributed by His-197. Glu-200 acts as the Proton donor in catalysis. Asp-278 lines the Zn(2+) pocket. Asp-279 is a binding site for substrate.

It belongs to the metallo-dependent hydrolases superfamily. Adenosine and AMP deaminases family. Adenosine deaminase subfamily. It depends on Zn(2+) as a cofactor.

It carries out the reaction adenosine + H2O + H(+) = inosine + NH4(+). The enzyme catalyses 2'-deoxyadenosine + H2O + H(+) = 2'-deoxyinosine + NH4(+). Catalyzes the hydrolytic deamination of adenosine and 2-deoxyadenosine. The sequence is that of Adenosine deaminase from Klebsiella pneumoniae subsp. pneumoniae (strain ATCC 700721 / MGH 78578).